The following is a 919-amino-acid chain: 2-oxoadipate dehydrogenase complex component E1 (919 aa).

N6-succinyllysine occurs at positions 183 and 188. A disordered region spans residues 299–320 (GKTRGRQQSRQDGDYSPDNSAQ). 2 positions are modified to N6-succinyllysine: lysine 800 and lysine 818.

This sequence belongs to the alpha-ketoglutarate dehydrogenase family. As to quaternary structure, the 2-oxoadipate dehydrogenase complex is composed of OADH (2-oxoadipate dehydrogenase; E1a), DLST (dihydrolipoamide succinyltransferase; E2) and DLD (dihydrolipoamide dehydrogenase; E3). E1a functional unit is a dimer. Interacts with DLST. The cofactor is thiamine diphosphate.

The protein resides in the mitochondrion. The enzyme catalyses N(6)-[(R)-lipoyl]-L-lysyl-[protein] + 2-oxoadipate + H(+) = N(6)-[(R)-S(8)-glutaryldihydrolipoyl]-L-lysyl-[protein] + CO2. It functions in the pathway amino-acid degradation. Its function is as follows. 2-oxoadipate dehydrogenase (E1a) component of the 2-oxoadipate dehydrogenase complex (OADHC). Participates in the first step, rate limiting for the overall conversion of 2-oxoadipate (alpha-ketoadipate) to glutaryl-CoA and CO(2) catalyzed by the whole OADHC. Catalyzes the irreversible decarboxylation of 2-oxoadipate via the thiamine diphosphate (ThDP) cofactor and subsequent transfer of the decarboxylated acyl intermediate on an oxidized dihydrolipoyl group that is covalently amidated to the E2 enzyme (dihydrolipoyllysine-residue succinyltransferase or DLST). Can catalyze the decarboxylation of 2-oxoglutarate in vitro, but at a much lower rate than 2-oxoadipate. Responsible for the last step of L-lysine, L-hydroxylysine and L-tryptophan catabolism with the common product being 2-oxoadipate. This Homo sapiens (Human) protein is 2-oxoadipate dehydrogenase complex component E1 (DHTKD1).